Consider the following 847-residue polypeptide: MSVKLLERILRAGEGRTLKRLRNIAHTVNAIEDEYKGCTDGELRTFAFDLKVRHQNGESLDSILPEAFAMVREASSRTLGLRHFDVQIMGGAALHMGYIAEMFTGEGKTLVATLPAFLNSLSGNGVHIVTVNDYLAGYHSQQMGRVYKVLGLETGVILADQDPSTRAQQYRADITYGTNNEFGFDYLRDNMAWSCAERVQRGHNFVILDEVDSILIDEARTPLIISGSSSGEVSRWFVEFAGIARALTAGEDYDVDERKHTVGVLEPGIAKVEDLLGISNLYESVNTPLISFLNNSIKAKELFKRDRDYVVLDGEVMIVDEHTGRILSGRRYNEGLHQAIEAKEGVEIKAENQTLATVTLQNYFRLYKKISGMTGTAVTEASEFMSTYKLPVVSIPTNKPNIRKDHPDVVYKNEQIKFENLADHVRECYTRGQPVLIGTTSVEKSEYVSKLLSKRGVRHEVLNAKNHAKEARIVAEAGRLRAVTVATNMAGRGTDIILGGNPEVLTAVELRRKGLDPSKDPERYEQAWSSAFPKLHRRTREEAEKVIEAGGLMVIGTERHESRRIDNQLRGRSGRQGDPGESRFYLSLTDDLMRKFNPGAASALAARVPDDTAIESKLVSRAIRSAQAQVESLNAETRKNVLKYDDVLNRQRAAIYTDRSRILEGGDIADRVQAFLSDAIEEIINSHAVTAWDFDALWADLKTIYPVGISIEELTDEAGGMGRITPDFVMREILSDAKFAYEKRESEIGPESMRDLERKVVLSVIDRCWRDHLYEMEYLKEGIGLRAMAQRDPLVEYQKEGFDMFEAMMGRIREESIGYLFNIDAQVSSNSPSDARNRPIEHDDNAV.

Residues glutamine 87, 105-109, and aspartate 495 contribute to the ATP site; that span reads GEGKT. The disordered stretch occupies residues 828-847; sequence SSNSPSDARNRPIEHDDNAV. The span at 835 to 847 shows a compositional bias: basic and acidic residues; it reads ARNRPIEHDDNAV.

It belongs to the SecA family. As to quaternary structure, monomer and homodimer. Part of the essential Sec protein translocation apparatus which comprises SecA, SecYEG and auxiliary proteins SecDF. Other proteins may also be involved.

It is found in the cell membrane. It localises to the cytoplasm. The catalysed reaction is ATP + H2O + cellular proteinSide 1 = ADP + phosphate + cellular proteinSide 2.. Its function is as follows. Part of the Sec protein translocase complex. Interacts with the SecYEG preprotein conducting channel. Has a central role in coupling the hydrolysis of ATP to the transfer of proteins into and across the cell membrane, serving as an ATP-driven molecular motor driving the stepwise translocation of polypeptide chains across the membrane. The sequence is that of Protein translocase subunit SecA from Tropheryma whipplei (strain TW08/27) (Whipple's bacillus).